A 541-amino-acid polypeptide reads, in one-letter code: Forkhead box protein O (541 aa).

The span at 118 to 150 (NEQCGQLGGASSNGSTAMLHTPDGSNSHQTSFP) shows a compositional bias: polar residues. Disordered regions lie at residues 118–168 (NEQC…GKKT) and 252–291 (WVIN…GAKK). A DNA-binding region (fork-head) is located at residues 175–268 (WGNMSYAELI…KPGRNPRRTR (94 aa)). T273 is subject to Phosphothreonine. S319 is modified (phosphoserine; by CaMK2).

As to quaternary structure, interacts with rle-1. Interacts with unc-43 and tax-6. Interacts with jnk-1. Interacts with ftt-2. Interacts with prmt-1. Interacts with hcf-1. Post-translationally, phosphorylated by akt-1 and/or akt-2. Phosphorylated by sgk-1. Phosphorylated by unc-43. Phosphorylated by jnk-1. Dephosphorylated by tax-6 in vitro. In terms of processing, ubiquitinated. Ubiquitination by rle-1 leads to proteasome-mediated degradation. Methylation by prmt-1 prevents phosphorylation and promotes translocation to the nucleus to allow for daf-16-dependent transcription. In terms of tissue distribution, isoform b and isoform c are expressed in ectoderm, muscles, intestine and neurons. Isoform b is also expressed in the pharynx. The intestine appears to be the primary site of longevity function.

It localises to the nucleus. It is found in the cytoplasm. Forkhead-type transcription factor. Binds to the promoters of genes that contain the daf-16/FOXO binding element (DBE), TTGTTTAC, in their regulatory region. Functions in the Insulin/IGF-1-like signaling (IIS) mediated pathway which affects lipogenesis, lifespan, starvation survival, heat shock and oxidative stress responses, sleep, associative memory, and dauer formation. Longevity signaling predominantly arises from expression in the intestine. Acts in the intestine to mediate the role of slo-1 in age-associated decline in motor activity and longevity. Transcriptional activity of daf-16/FOXO is negatively regulated by interaction with host cell factor homolog hcf-1; and by cytoplasmic sequestration by association with ftt-2. Inhibition is required for the carbon dioxide (CO2) avoidance response. Upon loss of inhibition, daf-16 translocates to the nucleus to regulate genes that result in delayed reproduction and growth while increasing stress resistance starvation tolerance and longevity. Association with arginine methyltransferase prmt-1 prevents phosphorylation and allows for translocation to the nucleus and the subsequent transcription of longevity-related genes. Modulation of its activity by cGMP levels in sensory neurons regulates lifespan. Has a protective role against muscle dystrophy. Involved in mediating protection against aberrant protein aggregation proteotoxicity. Influences transcription of genes that code for proteins involved in immunity as part of a general stress response. Targets genes that inhibit and stimulate tumor growth. Targets kinases, phosphatases and transcription factors that are primarily involved in signaling and gene regulation. Thought to regulate ins-7 in FOXO-to-FOXO signaling, which coordinates daf-16 expression. Activity is positively regulated by shc-1-mediated inhibition of daf-2 and activation of JNK pathway. Through the regulation of its activity by shc-1-mediated inhibition of daf-2 and activation of JNK pathway, plays a role in maintaining the integrity of the gonad. Functions by indirect interaction with jnk-1 of the mitogen-activated protein kinase (MAPK) pathway. Involved in increased proteasome activity by activating expression of rpn-6.1 in response to proteotoxic stress, leading to enhanced assembly of the 26S proteasome, followed by higher proteasome activity. Also regulates proteasome activity in the intestine by preventing expression of deubiquitinase ubh-4. Represses transcription of natc-1. Involved in regulation of srh-234 expression. Binds to the promoter of the AMPK-gamma regulatory subunit, aakg-4, and activates its transcription. Also activates transcription of AMPK-gamma regulatory subunit, aakg-1. Maintains endoplasmic reticulum (ER) function by inducing protein degradation and elimination to remove misfolded secretory proteins from the ER independently of the ire-1/xbp-1 unfolded protein response pathway. Regulates epidermal innate immunity to nematophagous fungal infection and physical wounding which trigger bli-3 induced ROS release, leading to daf-16 activation independently of daf-2 signaling. May negatively regulate resistance to stress caused by oxidized cholesterol adducts by preventing the activation of daf-9 and nuclear hormone receptor daf-12, two members of the steroid signaling pathway. Promotes apoptosis during embryonic development. Probably through the regulation of the autophagy genes atg-18 and atg-16.2, plays a role in regulating stem cell number in the germline during larval development. Plays a role in learning and memory; including associative memory, and aversive gustatory associated learning known as salt avoidance learning. Plays a role in regulating gene transcription in response to white light exposure. Binds to the promoter of dex-1 to positively regulate its expression in seam cells during the dauer phase. Plays a role in transgenerational lipid accumulation in response to a high-fat diet. Functionally, functions in the Insulin/IGF-1-like signaling (IIS) mediated pathway. May play a role in lifespan modulation, but less significant than that played by isoforms d and f. Its function is as follows. Functions in the Insulin/IGF-1-like signaling (IIS) mediated pathway. Transcript level in the early adult may play a role in lifespan modulation, but effect is more significant than that played by isoform a. This chain is Forkhead box protein O, found in Caenorhabditis elegans.